The following is a 333-amino-acid chain: Eukaryotic translation initiation factor 2 subunit 2 (333 aa).

2 disordered regions span residues 1–120 (MSGD…LDIM) and 139–165 (ILEKDEALEDEDSKKDDGISFSNQTGP). S2 is subject to N-acetylserine. Residue S2 is modified to Phosphoserine. S13 is modified (phosphoserine; by PKC; in vitro). The segment covering 13–22 (SKKKKKKKKP) has biased composition (basic residues). Phosphothreonine is present on T36. The segment covering 40–51 (ETKEVEPEPTED) has biased composition (basic and acidic residues). Residue S67 is modified to Phosphoserine; by CK2. A compositionally biased stretch (basic and acidic residues) spans 96–105 (EGVKDLKIEN). Residue K102 forms a Glycyl lysine isopeptide (Lys-Gly) (interchain with G-Cter in SUMO2) linkage. Composition is skewed to acidic residues over residues 106–118 (DVQEPAEPEDDLD) and 139–149 (ILEKDEALEDE). Phosphoserine is present on S158. S218 bears the Phosphoserine; by PKA; in vitro mark. N6-acetyllysine occurs at positions 265 and 293. The C4-type zinc finger occupies 281–305 (CHTCRSPDTILQKDTRLYFLQCETC).

Belongs to the eIF-2-beta/eIF-5 family. In terms of assembly, eukaryotic translation initiation factor 2 eIF2 is a heterotrimeric complex composed of an alpha (EIF2S1), a beta (EIF2S2) and a gamma (EIF2S3) chain. eIF2 is member of the 43S pre-initiation complex (43S PIC). eIF2 forms a complex with at least CELF1/CUGBP1, CALR, CALR3, EIF2S1, EIF2S2, HSP90B1 and HSPA5. Interacts with BZW2/5MP1. Interacts with EIF5. The N-terminus is blocked.

The protein localises to the cytoplasm. The protein resides in the cytosol. Its function is as follows. Component of the eIF2 complex that functions in the early steps of protein synthesis by forming a ternary complex with GTP and initiator tRNA. This complex binds to a 40S ribosomal subunit, followed by mRNA binding to form the 43S pre-initiation complex (43S PIC). Junction of the 60S ribosomal subunit to form the 80S initiation complex is preceded by hydrolysis of the GTP bound to eIF2 and release of an eIF2-GDP binary complex. In order for eIF2 to recycle and catalyze another round of initiation, the GDP bound to eIF2 must exchange with GTP by way of a reaction catalyzed by eIF2B. This chain is Eukaryotic translation initiation factor 2 subunit 2 (EIF2S2), found in Oryctolagus cuniculus (Rabbit).